Reading from the N-terminus, the 318-residue chain is Methionyl-tRNA formyltransferase (318 aa).

120–123 (SLLP) lines the (6S)-5,6,7,8-tetrahydrofolate pocket.

The protein belongs to the Fmt family.

The catalysed reaction is L-methionyl-tRNA(fMet) + (6R)-10-formyltetrahydrofolate = N-formyl-L-methionyl-tRNA(fMet) + (6S)-5,6,7,8-tetrahydrofolate + H(+). Attaches a formyl group to the free amino group of methionyl-tRNA(fMet). The formyl group appears to play a dual role in the initiator identity of N-formylmethionyl-tRNA by promoting its recognition by IF2 and preventing the misappropriation of this tRNA by the elongation apparatus. The chain is Methionyl-tRNA formyltransferase from Variovorax paradoxus (strain S110).